Here is a 131-residue protein sequence, read N- to C-terminus: Small ribosomal subunit protein uS11 (131 aa).

The protein belongs to the universal ribosomal protein uS11 family. Part of the 30S ribosomal subunit. Interacts with proteins S7 and S18. Binds to IF-3.

Its function is as follows. Located on the platform of the 30S subunit, it bridges several disparate RNA helices of the 16S rRNA. Forms part of the Shine-Dalgarno cleft in the 70S ribosome. The protein is Small ribosomal subunit protein uS11 of Helicobacter pylori (strain P12).